An 829-amino-acid polypeptide reads, in one-letter code: Potassium voltage-gated channel unc-103 (829 aa).

The tract at residues 1–76 is disordered; that stretch reads MKTAVFGRDS…PRASHSSRRT (76 aa). Residues 1–123 lie on the Cytoplasmic side of the membrane; sequence MKTAVFGRDS…YSPFKAVWDW (123 aa). A compositionally biased stretch (gly residues) spans 46 to 66; sequence GVSGTGGGGSGGLQGAPGAGG. Residues 124–144 traverse the membrane as a helical segment; sequence IILLLVIYTAVFTPYVAAFLL. The Extracellular portion of the chain corresponds to 145-158; it reads RELQDTAKKSRFTE. A helical membrane pass occupies residues 159–179; sequence PLEIVDLIVDIMFIVDIIINF. Topologically, residues 180-203 are cytoplasmic; sequence RTTYVNENDEACQVVSDPGKIATH. Residues 204–224 traverse the membrane as a helical segment; the sequence is YFKGWFIIDMVAAVPFDLLLV. The Extracellular segment spans residues 225 to 234; the sequence is STNSDETTTL. The helical; Voltage-sensor transmembrane segment at 235–255 threads the bilayer; sequence IGLLKTARLLRLVRVARKLDR. Residues 256–261 are Cytoplasmic-facing; sequence YSEYGA. Residues 262–282 traverse the membrane as a helical segment; it reads AVLLLLMATFALIAHWLACIW. Residues 283-327 are Extracellular-facing; sequence YAIGSAELSHKEYTWLHQLSKQLAQPYTSTNGTIPTGGPTLKSRY. Asparagine 313 is a glycosylation site (N-linked (GlcNAc...) asparagine). The segment at residues 328–348 is an intramembrane region (pore-forming); sequence VTSLYFTLSTITSIGFGNVSA. Topologically, residues 349–354 are extracellular; that stretch reads TTDSEK. Residues 355-375 traverse the membrane as a helical segment; sequence IFTIIMMILGSLMYASVFGNV. Over 376-829 the chain is Cytoplasmic; it reads SAIIQRLYSG…TPTQETDTIL (454 aa). A nucleoside 3',5'-cyclic phosphate is bound at residue 458-559; sequence AFAGSTPGCL…ILRDDLLDVL (102 aa). The interval 601 to 674 is disordered; the sequence is SMNKDRYTTP…PLLRRSTNHH (74 aa). The span at 603–615 shows a compositional bias: basic and acidic residues; the sequence is NKDRYTTPPDGDH. Low complexity predominate over residues 640–650; the sequence is SAGSRSSSRCS.

Belongs to the potassium channel family. H (Eag) (TC 1.A.1.20) subfamily. Kv11.1/KCNH2 sub-subfamily. In terms of assembly, the potassium channel is composed of a homo- or heterotetrameric complex. Interacts with dnj-1; dnj-1 chaperone promotes tetramerization.

Its subcellular location is the cell membrane. Functionally, pore-forming (alpha) subunit of voltage-gated inwardly rectifying potassium channel. Channel properties are modulated by cAMP and subunit assembly. Regulates the movements of the male's copulatory spicules before and during male mating behavior. In Caenorhabditis elegans, this protein is Potassium voltage-gated channel unc-103.